The sequence spans 123 residues: Ribosome-binding factor A (123 aa).

The protein belongs to the RbfA family. In terms of assembly, monomer. Binds 30S ribosomal subunits, but not 50S ribosomal subunits or 70S ribosomes.

It is found in the cytoplasm. In terms of biological role, one of several proteins that assist in the late maturation steps of the functional core of the 30S ribosomal subunit. Associates with free 30S ribosomal subunits (but not with 30S subunits that are part of 70S ribosomes or polysomes). Required for efficient processing of 16S rRNA. May interact with the 5'-terminal helix region of 16S rRNA. In Syntrophus aciditrophicus (strain SB), this protein is Ribosome-binding factor A.